The primary structure comprises 259 residues: tRNA (guanine-N(7)-)-methyltransferase (259 aa).

Positions 1-36 (MTFPSHNPPETGHPSAAPDEALPAAEAPVPGDPEAR) are disordered. Residues 14–29 (PSAAPDEALPAAEAPV) are compositionally biased toward low complexity. S-adenosyl-L-methionine contacts are provided by Glu-91, Glu-116, Asp-143, and Asp-166. The active site involves Asp-166. Substrate contacts are provided by residues Lys-170, Asp-202, and 237-240 (TKFE).

This sequence belongs to the class I-like SAM-binding methyltransferase superfamily. TrmB family.

It catalyses the reaction guanosine(46) in tRNA + S-adenosyl-L-methionine = N(7)-methylguanosine(46) in tRNA + S-adenosyl-L-homocysteine. It participates in tRNA modification; N(7)-methylguanine-tRNA biosynthesis. Catalyzes the formation of N(7)-methylguanine at position 46 (m7G46) in tRNA. The sequence is that of tRNA (guanine-N(7)-)-methyltransferase from Aromatoleum aromaticum (strain DSM 19018 / LMG 30748 / EbN1) (Azoarcus sp. (strain EbN1)).